The sequence spans 302 residues: Homoserine O-acetyltransferase (302 aa).

Cys-142 (acyl-thioester intermediate) is an active-site residue. Substrate is bound by residues Lys-163 and Ser-192. Catalysis depends on His-235, which acts as the Proton acceptor. The active site involves Glu-237. A substrate-binding site is contributed by Arg-249.

The protein belongs to the MetA family.

The protein resides in the cytoplasm. The catalysed reaction is L-homoserine + acetyl-CoA = O-acetyl-L-homoserine + CoA. Its pathway is amino-acid biosynthesis; L-methionine biosynthesis via de novo pathway; O-acetyl-L-homoserine from L-homoserine: step 1/1. In terms of biological role, transfers an acetyl group from acetyl-CoA to L-homoserine, forming acetyl-L-homoserine. This is Homoserine O-acetyltransferase from Bacillus licheniformis (strain ATCC 14580 / DSM 13 / JCM 2505 / CCUG 7422 / NBRC 12200 / NCIMB 9375 / NCTC 10341 / NRRL NRS-1264 / Gibson 46).